The chain runs to 156 residues: S-ribosylhomocysteine lyase (156 aa).

The Fe cation site is built by H56, H60, and C123.

This sequence belongs to the LuxS family. In terms of assembly, homodimer. The cofactor is Fe cation.

It carries out the reaction S-(5-deoxy-D-ribos-5-yl)-L-homocysteine = (S)-4,5-dihydroxypentane-2,3-dione + L-homocysteine. In terms of biological role, involved in the synthesis of autoinducer 2 (AI-2) which is secreted by bacteria and is used to communicate both the cell density and the metabolic potential of the environment. The regulation of gene expression in response to changes in cell density is called quorum sensing. Catalyzes the transformation of S-ribosylhomocysteine (RHC) to homocysteine (HC) and 4,5-dihydroxy-2,3-pentadione (DPD). This Staphylococcus epidermidis (strain ATCC 35984 / DSM 28319 / BCRC 17069 / CCUG 31568 / BM 3577 / RP62A) protein is S-ribosylhomocysteine lyase.